The sequence spans 128 residues: KHDC1-like protein (128 aa).

It belongs to the KHDC1 family.

The chain is KHDC1-like protein (KHDC1L) from Homo sapiens (Human).